The sequence spans 1061 residues: MERVDELELLMEKSFWQEAEPSAELFQKKKVEASFSKIVLSRGMDNRYLVLAVDIVQSEEGNHEKHLIITASQSLEYKELCILRNDWCSVPVEPGDIIHLEGDCISNTWIIDEDFGYLILYPDMLISGTSIASSIRCMRRAVLSETFRSSDPATRQMLIGTVLHEVFQKAVSDSFAPEKLQELASQTIQEIRHLKEMYRLKLNQDEIKQEVEEYLPSFSKWAGDFMHKHTSTDFPQMQLSLPSDGSNSNSTCNIEVTNSLDIEESIWSPRFGLKGKIDVTVGVKIHRGCKTKYKIMPLELKTGKESNSIEHRSQLVLYTLLSQERRADPEAGLLLYLKTGQMYPVPAKHLDKRELLRLRNQMAFSLFHRINKSTGEKTELAPLPQIIEEQQTCKYCSQMGNCALYSRAVEQQMEDSSVPTSMWPKIKEETQHLKPIHLEYFSLWCLMLTLESQSKDNKRNYQHIWLMPASEMEESGSCIGSLIRIEHVKTVCDGQYLHNFQRKNGAIPITNLMAGDRIILSGEERTLFALSRGYVKEINSTTVTCSLDRNLSGLPESTLFRLDQEEKNCDIDTPLGNLSKLMENTRASQKLRDLIIDFREPQFISYLSSVLPHEAKDTVACILKGLNKPQRQAMKKVLLSKDYTLIVGMPGTGKTTTICTLVRILYACGFSVLLTSYTHSAVDNILLKLAKFKIGFLRLGQIQKVHPDIQKFTEEEICRSKSIKSLALLEELYNSQLIVATTCMGINHPIFSRKTFDFCIVDEASQISQPVCLGPLFFSRRFVLVGDHQQLPPLVLNREARALGMSESLFKRLEQNKNAVVQLTVQYRMNSKIMSLSNKLTYEGKLECGSDKVANAVINLPNFKDVKLELEFYADYSENPWLIAAFEPNNPVCFLNTHKVPAPEQVEKGGVSNIMEAKLVVFLTSVFIKAGCKPSDIGIIAPYRQQLKVISDLLAQSSVGMVEVNTVDRYQGRDKSIVVVSFVRSNEDGTLGELLKDWRRLNVAITRAKHKLILLGCVPSLSRYPPLRKLLNHLNSEKLIIDLPSGEHESLFHLLGDFQRK.

The nuclease activity stretch occupies residues 82-519; it reads ILRNDWCSVP…TNLMAGDRII (438 aa). Residues C137, C393, C396, and C402 each contribute to the [4Fe-4S] cluster site. A helicase activity region spans residues 520–1061; sequence LSGEERTLFA…FHLLGDFQRK (542 aa). 648-655 is a binding site for ATP; the sequence is GMPGTGKT.

Belongs to the DNA2/NAM7 helicase family. As to quaternary structure, interacts with BLM and WDHD1. [4Fe-4S] cluster serves as cofactor. Acetylated by EP300, leading to stimulate the 5'-3' endonuclease, the 5'-3' helicase and DNA-dependent ATPase activities, possibly by increasing DNA substrate affinity.

Its subcellular location is the nucleus. The protein resides in the mitochondrion. It catalyses the reaction ATP + H2O = ADP + phosphate + H(+). Key enzyme involved in DNA replication and DNA repair in nucleus and mitochondrion. Involved in Okazaki fragments processing by cleaving long flaps that escape FEN1: flaps that are longer than 27 nucleotides are coated by replication protein A complex (RPA), leading to recruit DNA2 which cleaves the flap until it is too short to bind RPA and becomes a substrate for FEN1. Also involved in 5'-end resection of DNA during double-strand break (DSB) repair: recruited by BLM and mediates the cleavage of 5'-ssDNA, while the 3'-ssDNA cleavage is prevented by the presence of RPA. Also involved in DNA replication checkpoint independently of Okazaki fragments processing. Possesses different enzymatic activities, such as single-stranded DNA (ssDNA)-dependent ATPase, 5'-3' helicase and endonuclease activities. While the ATPase and endonuclease activities are well-defined and play a key role in Okazaki fragments processing and DSB repair, the 5'-3' DNA helicase activity is subject to debate. According to various reports, the helicase activity is weak and its function remains largely unclear. Helicase activity may promote the motion of DNA2 on the flap, helping the nuclease function. This Bos taurus (Bovine) protein is DNA replication ATP-dependent helicase/nuclease DNA2 (DNA2).